We begin with the raw amino-acid sequence, 231 residues long: mRNA-decapping enzyme subunit 1 (231 aa).

The interval 92 to 120 (QNGSNNIQVNNGSDNSNRNSSGNGNSYKS) is disordered. Over residues 101–120 (NNGSDNSNRNSSGNGNSYKS) the composition is skewed to low complexity.

It belongs to the DCP1 family. In terms of assembly, component of the decapping complex composed of DCP1 and DCP2. Interacts with mRNAs, DHH1, LSM1, LSM2, LSM3, LSM4, LSM5, LSM6, LSM7, and the cap-binding proteins PAB1 and TIF4632/eIF-4G. In terms of processing, phosphorylated.

It is found in the cytoplasm. It localises to the P-body. Component of the decapping complex necessary for the degradation of mRNAs, both in normal mRNA turnover and in nonsense-mediated mRNA decay. Removes the 7-methyl guanine cap structure from mRNA molecules, yielding a 5'-phosphorylated mRNA fragment and 7m-GDP. Decapping is the major pathway of mRNA degradation in yeast. It occurs through deadenylation, decapping and subsequent 5' to 3' exonucleolytic decay of the transcript body. DCP1 is activated by the DEAD-box helicase DHH1 and destabilizes the eIF-4F cap-binding complex from the mRNA. The polypeptide is mRNA-decapping enzyme subunit 1 (DCP1) (Saccharomyces cerevisiae (strain ATCC 204508 / S288c) (Baker's yeast)).